Reading from the N-terminus, the 322-residue chain is N-acetyl-gamma-glutamyl-phosphate reductase (322 aa).

Cysteine 132 is an active-site residue.

This sequence belongs to the NAGSA dehydrogenase family. Type 1 subfamily.

The protein resides in the cytoplasm. The enzyme catalyses N-acetyl-L-glutamate 5-semialdehyde + phosphate + NADP(+) = N-acetyl-L-glutamyl 5-phosphate + NADPH + H(+). It functions in the pathway amino-acid biosynthesis; L-arginine biosynthesis; N(2)-acetyl-L-ornithine from L-glutamate: step 3/4. In terms of biological role, catalyzes the NADPH-dependent reduction of N-acetyl-5-glutamyl phosphate to yield N-acetyl-L-glutamate 5-semialdehyde. The protein is N-acetyl-gamma-glutamyl-phosphate reductase of Bacteroides thetaiotaomicron (strain ATCC 29148 / DSM 2079 / JCM 5827 / CCUG 10774 / NCTC 10582 / VPI-5482 / E50).